The chain runs to 469 residues: 6-phosphofructo-2-kinase/fructose-2,6-bisphosphatase 4 (469 aa).

A 6-phosphofructo-2-kinase region spans residues 1–249; the sequence is MASPRELTQN…YYLMNIHVTP (249 aa). Residue 46-54 participates in ATP binding; the sequence is GLPARGKTY. Positions 79 and 103 each coordinate beta-D-fructose 6-phosphate. D129 is an active-site residue. Residues T131 and R137 each coordinate beta-D-fructose 6-phosphate. C159 is a catalytic residue. 168 to 173 is a binding site for ATP; it reads NIVQVK. Beta-D-fructose 6-phosphate contacts are provided by K173, R194, and Y198. The interval 250 to 469 is fructose-2,6-bisphosphatase; sequence RSIYLCRHGE…EALVTVPAHQ (220 aa). R256 is a binding site for beta-D-fructose 2,6-bisphosphate. H257 serves as the catalytic Tele-phosphohistidine intermediate. Beta-D-fructose 2,6-bisphosphate-binding residues include N263, G269, and R306. The active-site Proton donor/acceptor is E326. Beta-D-fructose 2,6-bisphosphate-binding residues include Y337, R351, K355, Y366, Q392, and R396. 348-351 is a binding site for ATP; that stretch reads FALR. ATP is bound by residues 392–396 and Y428; that span reads QAVMR. T444 carries the post-translational modification Phosphothreonine; by PKC.

In the C-terminal section; belongs to the phosphoglycerate mutase family. Homodimer.

It catalyses the reaction beta-D-fructose 2,6-bisphosphate + H2O = beta-D-fructose 6-phosphate + phosphate. The enzyme catalyses beta-D-fructose 6-phosphate + ATP = beta-D-fructose 2,6-bisphosphate + ADP + H(+). With respect to regulation, the most important regulatory mechanism of these opposing activities is by phosphorylation and dephosphorylation of the enzyme. Functionally, synthesis and degradation of fructose 2,6-bisphosphate. The polypeptide is 6-phosphofructo-2-kinase/fructose-2,6-bisphosphatase 4 (PFKFB4) (Homo sapiens (Human)).